The following is a 356-amino-acid chain: Golgi-resident adenosine 3',5'-bisphosphate 3'-phosphatase (356 aa).

The residue at position 1 (Met1) is an N-acetylmethionine. The Cytoplasmic portion of the chain corresponds to 1–12 (MAPMGIRLSPLG). A helical membrane pass occupies residues 13 to 33 (VAVFFLLGLGVLYHLYSGFLA). Residues 34–356 (GRFSLFGLGS…KLPDLEKSGH (323 aa)) lie on the Lumenal side of the membrane. Residues 84–104 (ESNVLHEKSKGKTREGADDKM) form a disordered region. The active-site Proton acceptor is Asp108. Positions 131, 172, 174, and 175 each coordinate Mg(2+). The active-site Proton acceptor is the Thr177. 2 residues coordinate AMP: Ser240 and His243. Asn257 carries N-linked (GlcNAc...) asparagine glycosylation. AMP-binding residues include Gly266 and Lys270. Asp298 is a binding site for Mg(2+).

Belongs to the inositol monophosphatase superfamily. Requires Mg(2+) as cofactor. Post-translationally, N-glycosylated. Contains N-linked glycan resistant to endoglycosydase H.

It localises to the golgi apparatus. The protein resides in the trans-Golgi network membrane. It catalyses the reaction adenosine 3',5'-bisphosphate + H2O = AMP + phosphate. Its pathway is sulfur metabolism. Strongly inhibited by lithium. Exhibits 3'-nucleotidase activity toward adenosine 3',5'-bisphosphate (PAP), namely hydrolyzes adenosine 3',5'-bisphosphate into adenosine 5'-monophosphate (AMP) and a phosphate. May play a role in the formation of skeletal elements derived through endochondral ossification, possibly by clearing adenosine 3',5'-bisphosphate produced by Golgi sulfotransferases during glycosaminoglycan sulfation. Has no activity toward 3'-phosphoadenosine 5'-phosphosulfate (PAPS) or inositol phosphate (IP) substrates including I(1)P, I(1,4)P2, I(1,3,4)P3, I(1,4,5)P3 and I(1,3,4,5)P4. The chain is Golgi-resident adenosine 3',5'-bisphosphate 3'-phosphatase from Mus musculus (Mouse).